Here is a 76-residue protein sequence, read N- to C-terminus: Protein MATERNALLY EXPRESSED GENE 4 (76 aa).

A signal peptide spans 1-27 (MEYRKRVDALVFFSLLLLGYFAAHAHG). A disulfide bond links Cys53 and Cys75.

This sequence belongs to the MEG family. As to expression, expressed exclusively in endosperm.

This chain is Protein MATERNALLY EXPRESSED GENE 4 (MEG4), found in Zea mays (Maize).